A 309-amino-acid chain; its full sequence is Biotin synthase (309 aa).

Residues 35 to 259 (NKIQISSLLS…MIPKSYIRLS (225 aa)) enclose the Radical SAM core domain. [4Fe-4S] cluster contacts are provided by C50, C54, and C57. Residues C94, C125, C185, and R257 each coordinate [2Fe-2S] cluster.

Belongs to the radical SAM superfamily. Biotin synthase family. Homodimer. [4Fe-4S] cluster is required as a cofactor. The cofactor is [2Fe-2S] cluster.

The catalysed reaction is (4R,5S)-dethiobiotin + (sulfur carrier)-SH + 2 reduced [2Fe-2S]-[ferredoxin] + 2 S-adenosyl-L-methionine = (sulfur carrier)-H + biotin + 2 5'-deoxyadenosine + 2 L-methionine + 2 oxidized [2Fe-2S]-[ferredoxin]. The protein operates within cofactor biosynthesis; biotin biosynthesis; biotin from 7,8-diaminononanoate: step 2/2. Functionally, catalyzes the conversion of dethiobiotin (DTB) to biotin by the insertion of a sulfur atom into dethiobiotin via a radical-based mechanism. The polypeptide is Biotin synthase (Rickettsia felis (strain ATCC VR-1525 / URRWXCal2) (Rickettsia azadi)).